The chain runs to 350 residues: Anthranilate phosphoribosyltransferase (350 aa).

Residues Gly94, 97–98 (GS), Thr102, 104–107 (NVST), 122–130 (KHGNRSVSS), and Ser134 each bind 5-phospho-alpha-D-ribose 1-diphosphate. Gly94 serves as a coordination point for anthranilate. A Mg(2+)-binding site is contributed by Ser106. Asn125 is an anthranilate binding site. Residue Arg180 participates in anthranilate binding. Asp239 and Glu240 together coordinate Mg(2+).

It belongs to the anthranilate phosphoribosyltransferase family. Homodimer. Mg(2+) serves as cofactor.

The enzyme catalyses N-(5-phospho-beta-D-ribosyl)anthranilate + diphosphate = 5-phospho-alpha-D-ribose 1-diphosphate + anthranilate. It functions in the pathway amino-acid biosynthesis; L-tryptophan biosynthesis; L-tryptophan from chorismate: step 2/5. Its function is as follows. Catalyzes the transfer of the phosphoribosyl group of 5-phosphorylribose-1-pyrophosphate (PRPP) to anthranilate to yield N-(5'-phosphoribosyl)-anthranilate (PRA). The polypeptide is Anthranilate phosphoribosyltransferase (Geotalea uraniireducens (strain Rf4) (Geobacter uraniireducens)).